The chain runs to 244 residues: INO80 complex subunit E (244 aa).

The stretch at 10–54 forms a coiled coil; it reads DYKKKYRNLKRKLKFLIYEHECFQEELRKAQRKLLKVSRDKSFLL. The tract at residues 63–236 is disordered; that stretch reads VDEDSSDSDA…SGDDALDGDD (174 aa). A compositionally biased stretch (low complexity) spans 99–115; that stretch reads PPLGGAPSPSSLSLPPS. Positions 157-171 are enriched in basic residues; that stretch reads RPKREKRPRLPRKLK. Glycyl lysine isopeptide (Lys-Gly) (interchain with G-Cter in SUMO2) cross-links involve residues Lys159 and Lys171. Positions 202 to 212 are enriched in pro residues; that stretch reads PLPPPKMPPPT.

As to quaternary structure, component of the chromatin remodeling INO80 complex; specifically part of a complex module associated with the N-terminus of INO80.

The protein localises to the nucleus. In terms of biological role, putative regulatory component of the chromatin remodeling INO80 complex which is involved in transcriptional regulation, DNA replication and probably DNA repair. The polypeptide is INO80 complex subunit E (INO80E) (Homo sapiens (Human)).